The sequence spans 299 residues: Non-structural protein V (299 aa).

A disordered region spans residues Ser40–Glu91. Residues His110–Val120 are interaction with host STAT1. Positions Ser133 to Tyr163 are disordered. The span at Gly144–Thr160 shows a compositional bias: acidic residues. Zn(2+) contacts are provided by His232, Cys251, Cys255, Cys267, Cys269, Cys272, Cys276, and Cys279.

The protein belongs to the paramyxoviruses V protein family. As to quaternary structure, interacts with host IFIH1/MDA5 and DHX58/LGP2; these interactions are involved in the inhibition of the host type I interferon signaling pathway. Interacts with host TYK2; this interaction inhibits the type I interferon signaling pathway without affecting the type II pathway. Interacts with host IRF7; this interaction inhibits IRF7 translocation to the nucleus. Interacts with host CHUK. Interacts with host RELA/p65; this interaction inhibits the nuclear translocation of NF-KappaB. Interacts (via N-terminus) with host STAT1 and JAK1; these interactions inhibit STAT1 phosphorylation by Jak1 and thereby the type I interferon signaling pathway. Interacts (via C-terminus) with host STAT2; this interaction is involved in the inhibition of the host type I interferon signaling pathway. Forms a complex with host PPP1CA and PPP1CC; this interaction prevents dephosphorylation of host IFIH1/MDA5 and leads to the inhibition of the host type I interferon signaling pathway. Interacts with host IRF9; this interaction prevents the binding of IRF9 to STAT2 and thereby the type I interferon signaling pathway. Interacts with host RIGI regulatory protein (via CARDs domain) and host TRIM25 (via SPRY domain); these interactions prevent TRIM25-mediated ubiquitination of RIG-I and disrupts downstream RIG-I signaling.

It localises to the host cytoplasm. Its function is as follows. Plays an essential role in the inhibition of host immune response. Prevents the establishment of cellular antiviral state by blocking interferon-alpha/beta (IFN-alpha/beta) production and signaling pathway. Interacts with host IFIH1/MDA5 and DHX58/LGP2 to inhibit the transduction pathway involved in the activation of IFN-beta promoter, thus protecting the virus against cell antiviral state. Blocks the type I interferon signaling pathway by interacting with host TYK2 and thereby inhibiting downstream STAT1 and STAT2 phosphorylation. Blocks the type I interferon signaling pathway by disrupting the RIG-I signaling pathway. Moderately affects the type II interferon signaling. Prevents PP1alpha/gamma-mediated dephosphorylation of host IFIH1/MDA5 and thus blocks its activation. The protein is Non-structural protein V (P/V) of Homo sapiens (Human).